The chain runs to 462 residues: Gamma-aminobutyric acid receptor subunit alpha-5 (462 aa).

The first 31 residues, 1 to 31 (MDNGMFSGFIMIKNLLLFCISMNLSSHFGFS), serve as a signal peptide directing secretion. Residues 32 to 260 (QMPTSSVKDE…FHLKRKIGYF (229 aa)) lie on the Extracellular side of the membrane. Asparagine 45 carries an N-linked (GlcNAc...) asparagine glycan. 4-aminobutanoate is bound at residue arginine 101. Residue asparagine 145 is glycosylated (N-linked (GlcNAc...) asparagine). 4-aminobutanoate is bound at residue threonine 164. Cysteine 173 and cysteine 187 are disulfide-bonded. 2 N-linked (GlcNAc...) asparagine glycosylation sites follow: asparagine 207 and asparagine 236. Residues 261-281 (VIQTYLPCIMTVILSQVSFWL) form a helical membrane-spanning segment. The Cytoplasmic segment spans residues 282–286 (NRESV). The helical transmembrane segment at 287 to 308 (PARTVFGVTTVLTMTTLSISAR) threads the bilayer. Over 309–318 (NSLPKVAYAT) the chain is Extracellular. The chain crosses the membrane as a helical span at residues 319–340 (AMDWFIAVCYAFVFSALIEFAT). Residues 341 to 427 (VNYFTKRGWA…TYNSISKIDK (87 aa)) lie on the Cytoplasmic side of the membrane. Residue lysine 355 forms a Glycyl lysine isopeptide (Lys-Gly) (interchain with G-Cter in ubiquitin) linkage. A disordered region spans residues 377–412 (FTTGKMSHPPNIPKEQTPAGTSNTTSVSVKPSEEKT). The chain crosses the membrane as a helical span at residues 428–448 (MSRIVFPVLFGTFNLVYWATY). The Extracellular segment spans residues 449–462 (LNREPVIKGAASPK).

This sequence belongs to the ligand-gated ion channel (TC 1.A.9) family. Gamma-aminobutyric acid receptor (TC 1.A.9.5) subfamily. GABRA5 sub-subfamily. As to quaternary structure, heteropentamer, formed by a combination of alpha (GABRA1-6), beta (GABRB1-3), gamma (GABRG1-3), delta (GABRD), epsilon (GABRE), rho (GABRR1-3), pi (GABRP) and theta (GABRQ) chains, each subunit exhibiting distinct physiological and pharmacological properties.

It is found in the postsynaptic cell membrane. Its subcellular location is the cell membrane. It catalyses the reaction chloride(in) = chloride(out). In terms of biological role, alpha subunit of the heteropentameric ligand-gated chloride channel gated by gamma-aminobutyric acid (GABA), a major inhibitory neurotransmitter in the brain. GABA-gated chloride channels, also named GABA(A) receptors (GABAAR), consist of five subunits arranged around a central pore and contain GABA active binding site(s) located at the alpha and beta subunit interface(s). When activated by GABA, GABAARs selectively allow the flow of chloride anions across the cell membrane down their electrochemical gradient. GABAARs containing alpha-5/GABRA5 subunits are mainly extrasynaptic and contribute to the tonic GABAergic inhibition in the hippocampus. Extrasynaptic alpha-5-containing GABAARs in CA1 pyramidal neurons play a role in learning and memory processes. This chain is Gamma-aminobutyric acid receptor subunit alpha-5, found in Homo sapiens (Human).